Consider the following 156-residue polypeptide: S-ribosylhomocysteine lyase (156 aa).

Fe cation-binding residues include H56, H60, and C123.

The protein belongs to the LuxS family. As to quaternary structure, homodimer. Fe cation is required as a cofactor.

The enzyme catalyses S-(5-deoxy-D-ribos-5-yl)-L-homocysteine = (S)-4,5-dihydroxypentane-2,3-dione + L-homocysteine. In terms of biological role, involved in the synthesis of autoinducer 2 (AI-2) which is secreted by bacteria and is used to communicate both the cell density and the metabolic potential of the environment. The regulation of gene expression in response to changes in cell density is called quorum sensing. Catalyzes the transformation of S-ribosylhomocysteine (RHC) to homocysteine (HC) and 4,5-dihydroxy-2,3-pentadione (DPD). The chain is S-ribosylhomocysteine lyase from Staphylococcus epidermidis (strain ATCC 35984 / DSM 28319 / BCRC 17069 / CCUG 31568 / BM 3577 / RP62A).